The chain runs to 136 residues: Glutamyl-tRNA(Gln) amidotransferase subunit C, mitochondrial (136 aa).

The protein belongs to the GatC family. In terms of assembly, subunit of the heterotrimeric GatCAB amidotransferase (AdT) complex, composed of A (QRSL1), B (GATB) and C (GATC) subunits.

It localises to the mitochondrion. It carries out the reaction L-glutamyl-tRNA(Gln) + L-glutamine + ATP + H2O = L-glutaminyl-tRNA(Gln) + L-glutamate + ADP + phosphate + H(+). Functionally, allows the formation of correctly charged Gln-tRNA(Gln) through the transamidation of misacylated Glu-tRNA(Gln) in the mitochondria. The reaction takes place in the presence of glutamine and ATP through an activated gamma-phospho-Glu-tRNA(Gln). The sequence is that of Glutamyl-tRNA(Gln) amidotransferase subunit C, mitochondrial from Homo sapiens (Human).